The primary structure comprises 311 residues: Mediator of RNA polymerase II transcription subunit 27 (311 aa).

This sequence belongs to the Mediator complex subunit 27 family. In terms of assembly, component of the Mediator complex.

Its subcellular location is the nucleus. Functionally, component of the Mediator complex, a coactivator involved in the regulated transcription of nearly all RNA polymerase II-dependent genes. Mediator functions as a bridge to convey information from gene-specific regulatory proteins to the basal RNA polymerase II transcription machinery. Mediator is recruited to promoters by direct interactions with regulatory proteins and serves as a scaffold for the assembly of a functional preinitiation complex with RNA polymerase II and the general transcription factors. This is Mediator of RNA polymerase II transcription subunit 27 (med27) from Xenopus tropicalis (Western clawed frog).